Reading from the N-terminus, the 282-residue chain is NH(3)-dependent NAD(+) synthetase (282 aa).

51–58 (GISGGVDS) contributes to the ATP binding site. Aspartate 57 is a Mg(2+) binding site. Deamido-NAD(+) is bound at residue arginine 148. Residue threonine 168 coordinates ATP. A Mg(2+)-binding site is contributed by glutamate 173. The deamido-NAD(+) site is built by lysine 181 and aspartate 188. Positions 197 and 219 each coordinate ATP. 268 to 269 (HK) is a binding site for deamido-NAD(+).

The protein belongs to the NAD synthetase family. Homodimer.

The enzyme catalyses deamido-NAD(+) + NH4(+) + ATP = AMP + diphosphate + NAD(+) + H(+). It participates in cofactor biosynthesis; NAD(+) biosynthesis; NAD(+) from deamido-NAD(+) (ammonia route): step 1/1. In terms of biological role, catalyzes the ATP-dependent amidation of deamido-NAD to form NAD. Uses ammonia as a nitrogen source. This chain is NH(3)-dependent NAD(+) synthetase, found in Burkholderia lata (strain ATCC 17760 / DSM 23089 / LMG 22485 / NCIMB 9086 / R18194 / 383).